A 372-amino-acid chain; its full sequence is Heat-inducible transcription repressor HrcA (372 aa).

The segment at 296–331 is disordered; it reads VSSGYGRSGEAGEPAGNDPVGEPETESETESQTNDM.

The protein belongs to the HrcA family.

Negative regulator of class I heat shock genes (grpE-dnaK-dnaJ and groELS operons). Prevents heat-shock induction of these operons. This Bifidobacterium longum subsp. infantis (strain ATCC 15697 / DSM 20088 / JCM 1222 / NCTC 11817 / S12) protein is Heat-inducible transcription repressor HrcA.